The sequence spans 291 residues: Sesquiterpene cyclase astC (291 aa).

This sequence belongs to the HAD-like hydrolase superfamily.

It carries out the reaction (2E,6E)-farnesyl diphosphate = (S,S)-drim-8-en-11-yl diphosphate. It participates in secondary metabolite biosynthesis; terpenoid biosynthesis. Its function is as follows. Sesquiterpene cyclase; part of the gene cluster that mediates the biosynthesis of astellolides, drimane-type sesquiterpene esters that show antimicrobial, anti-inflammatory, and anti-tumor activities. The first step in astellolide biosynthesis is performed by the sesquiterpene cyclase astC that catalyzes the formation of drimanyl pyrophosphate from farnesyl pyrophosphate. Drimanyl pyrophosphate is then dephosphorylated by the sesquiterpene phosphatase astI to produce drimanyl monophosphate which is further dephosphorylated to drim-8-ene-11-ol by atsK. Drim-8-ene-11-ol is converted to confertifolin, probably by the cytochrome P450 monooxygenase astD and/or the dehydrogenase astE. The cytochrome P450 monooxygenases astB, astF and astJ then hydroxylate confertifolin at C6, C14, or C15 to form trihydroxy confertifolin. The nonribosomal peptide synthetase astA catalyzes ester bond formation between trihydroxy contifolin and benzoic acid (BA) or 4-hydroxy benzoic acid (4HBA), leading to the formation of dideacetyl astellolides A and B, respectively. Finally, the O-acetyltransferase astG converts dideacetyl astellolides A and B into deacetyl astellolides A and B. In Aspergillus oryzae (strain ATCC 42149 / RIB 40) (Yellow koji mold), this protein is Sesquiterpene cyclase astC.